Consider the following 263-residue polypeptide: Dermonecrotic toxin SpaSicTox-betaIF1 (263 aa).

Residues glutamate 15 and aspartate 17 each contribute to the Mg(2+) site. The active-site Nucleophile is the histidine 31. Cystine bridges form between cysteine 35–cysteine 41 and cysteine 37–cysteine 179. Aspartate 75 contributes to the Mg(2+) binding site.

The protein belongs to the arthropod phospholipase D family. Class II subfamily. Requires Mg(2+) as cofactor. Expressed by the venom gland.

The protein resides in the secreted. It carries out the reaction an N-(acyl)-sphingosylphosphocholine = an N-(acyl)-sphingosyl-1,3-cyclic phosphate + choline. The catalysed reaction is an N-(acyl)-sphingosylphosphoethanolamine = an N-(acyl)-sphingosyl-1,3-cyclic phosphate + ethanolamine. The enzyme catalyses a 1-acyl-sn-glycero-3-phosphocholine = a 1-acyl-sn-glycero-2,3-cyclic phosphate + choline. It catalyses the reaction a 1-acyl-sn-glycero-3-phosphoethanolamine = a 1-acyl-sn-glycero-2,3-cyclic phosphate + ethanolamine. Functionally, dermonecrotic toxins cleave the phosphodiester linkage between the phosphate and headgroup of certain phospholipids (sphingolipid and lysolipid substrates), forming an alcohol (often choline) and a cyclic phosphate. This toxin acts on sphingomyelin (SM). It may also act on ceramide phosphoethanolamine (CPE), lysophosphatidylcholine (LPC) and lysophosphatidylethanolamine (LPE), but not on lysophosphatidylserine (LPS), and lysophosphatidylglycerol (LPG). It acts by transphosphatidylation, releasing exclusively cyclic phosphate products as second products. Induces dermonecrosis, hemolysis, increased vascular permeability, edema, inflammatory response, and platelet aggregation. This Sicarius patagonicus (Six-eyed sand spider) protein is Dermonecrotic toxin SpaSicTox-betaIF1.